Here is a 477-residue protein sequence, read N- to C-terminus: Argininosuccinate lyase (477 aa).

Residues 1 to 18 are compositionally biased toward polar residues; it reads MTTSSHSSEQPTSTQTSG. The disordered stretch occupies residues 1–21; it reads MTTSSHSSEQPTSTQTSGMWG.

The protein belongs to the lyase 1 family. Argininosuccinate lyase subfamily.

It is found in the cytoplasm. It catalyses the reaction 2-(N(omega)-L-arginino)succinate = fumarate + L-arginine. The protein operates within amino-acid biosynthesis; L-arginine biosynthesis; L-arginine from L-ornithine and carbamoyl phosphate: step 3/3. The protein is Argininosuccinate lyase of Acinetobacter baylyi (strain ATCC 33305 / BD413 / ADP1).